We begin with the raw amino-acid sequence, 88 residues long: Small ribosomal subunit protein uS15 (88 aa).

Belongs to the universal ribosomal protein uS15 family. Part of the 30S ribosomal subunit. Forms a bridge to the 50S subunit in the 70S ribosome, contacting the 23S rRNA.

Functionally, one of the primary rRNA binding proteins, it binds directly to 16S rRNA where it helps nucleate assembly of the platform of the 30S subunit by binding and bridging several RNA helices of the 16S rRNA. Forms an intersubunit bridge (bridge B4) with the 23S rRNA of the 50S subunit in the ribosome. This Borreliella afzelii (strain PKo) (Borrelia afzelii) protein is Small ribosomal subunit protein uS15.